The following is a 458-amino-acid chain: Tyrosine phenol-lyase (458 aa).

Lys-258 is subject to N6-(pyridoxal phosphate)lysine.

It belongs to the beta-eliminating lyase family. Homotetramer. Requires pyridoxal 5'-phosphate as cofactor.

The catalysed reaction is L-tyrosine + H2O = phenol + pyruvate + NH4(+). In Symbiobacterium thermophilum (strain DSM 24528 / JCM 14929 / IAM 14863 / T), this protein is Tyrosine phenol-lyase (tpl).